We begin with the raw amino-acid sequence, 94 residues long: Small ribosomal subunit protein uS19c (94 aa).

It belongs to the universal ribosomal protein uS19 family.

It localises to the plastid. Its function is as follows. Protein S19 forms a complex with S13 that binds strongly to the 16S ribosomal RNA. This is Small ribosomal subunit protein uS19c (rps19) from Epifagus virginiana (Beechdrops).